The primary structure comprises 1060 residues: Carbamoyl phosphate synthase large chain (1060 aa).

The carboxyphosphate synthetic domain stretch occupies residues 1-401 (MPKRTDIRKI…SLLKACRSLE (401 aa)). 12 residues coordinate ATP: Arg129, Arg169, Gly175, Gly176, Arg208, Ile210, Glu215, Gly241, Ile242, His243, Gln284, and Glu298. Residues 133-327 (KQLMEELNQP…IAKLAAKIAV (195 aa)) form the ATP-grasp 1 domain. 3 residues coordinate Mg(2+): Gln284, Glu298, and Asn300. Residues Gln284, Glu298, and Asn300 each coordinate Mn(2+). Residues 402 to 546 (IGVDHIKIAD…YSTYAVENES (145 aa)) form an oligomerization domain region. The segment at 547–929 (LISDKASILV…ALYKAFEAAY (383 aa)) is carbamoyl phosphate synthetic domain. Residues 671-861 (EATLQALNIP…MAQVATKVIL (191 aa)) form the ATP-grasp 2 domain. Residues Arg707, Ala746, Leu748, Glu752, Gly777, Val778, His779, Ser780, Gln820, and Glu832 each contribute to the ATP site. Positions 820, 832, and 834 each coordinate Mg(2+). Mn(2+) is bound by residues Gln820, Glu832, and Asn834. The MGS-like domain maps to 930-1060 (LHMPDYGNIV…SRAFTLKVLD (131 aa)). Residues 930–1060 (LHMPDYGNIV…SRAFTLKVLD (131 aa)) form an allosteric domain region.

Belongs to the CarB family. Composed of two chains; the small (or glutamine) chain promotes the hydrolysis of glutamine to ammonia, which is used by the large (or ammonia) chain to synthesize carbamoyl phosphate. Tetramer of heterodimers (alpha,beta)4. It depends on Mg(2+) as a cofactor. The cofactor is Mn(2+).

The catalysed reaction is hydrogencarbonate + L-glutamine + 2 ATP + H2O = carbamoyl phosphate + L-glutamate + 2 ADP + phosphate + 2 H(+). It carries out the reaction hydrogencarbonate + NH4(+) + 2 ATP = carbamoyl phosphate + 2 ADP + phosphate + 2 H(+). It participates in amino-acid biosynthesis; L-arginine biosynthesis; carbamoyl phosphate from bicarbonate: step 1/1. The protein operates within pyrimidine metabolism; UMP biosynthesis via de novo pathway; (S)-dihydroorotate from bicarbonate: step 1/3. Functionally, large subunit of the glutamine-dependent carbamoyl phosphate synthetase (CPSase). CPSase catalyzes the formation of carbamoyl phosphate from the ammonia moiety of glutamine, carbonate, and phosphate donated by ATP, constituting the first step of 2 biosynthetic pathways, one leading to arginine and/or urea and the other to pyrimidine nucleotides. The large subunit (synthetase) binds the substrates ammonia (free or transferred from glutamine from the small subunit), hydrogencarbonate and ATP and carries out an ATP-coupled ligase reaction, activating hydrogencarbonate by forming carboxy phosphate which reacts with ammonia to form carbamoyl phosphate. In Streptococcus agalactiae serotype V (strain ATCC BAA-611 / 2603 V/R), this protein is Carbamoyl phosphate synthase large chain.